A 186-amino-acid chain; its full sequence is Lipid A acyltransferase PagP (186 aa).

Residues methionine 1–alanine 19 form the signal peptide. Active-site residues include histidine 60, aspartate 103, and serine 104.

This sequence belongs to the lipid A palmitoyltransferase family. As to quaternary structure, homodimer.

Its subcellular location is the cell outer membrane. It catalyses the reaction a lipid A + a 1,2-diacyl-sn-glycero-3-phosphocholine = a hepta-acyl lipid A + a 2-acyl-sn-glycero-3-phosphocholine. It carries out the reaction a lipid IVA + a 1,2-diacyl-sn-glycero-3-phosphocholine = a lipid IVB + a 2-acyl-sn-glycero-3-phosphocholine. The enzyme catalyses a lipid IIA + a 1,2-diacyl-sn-glycero-3-phosphocholine = a lipid IIB + a 2-acyl-sn-glycero-3-phosphocholine. Functionally, transfers a fatty acid residue from the sn-1 position of a phospholipid to the N-linked hydroxyfatty acid chain on the proximal unit of lipid A or its precursors. Confers resistance to cationic antimicrobial peptides (CAMPs). Promotes the ability of L.pneumophila to replicate and/or survive in macrophages. Important for ability to kill macrophages and to promote the virulence. In Legionella pneumophila, this protein is Lipid A acyltransferase PagP.